A 465-amino-acid chain; its full sequence is Trigger factor (465 aa).

Residues 163 to 248 (GDVINFNFKG…INKIKENQPA (86 aa)) form the PPIase FKBP-type domain. The tract at residues 431 to 465 (EIVNKNQNDNEIEQDKEQKDNNEEKIKQENNLENK) is disordered. Over residues 443 to 465 (EQDKEQKDNNEEKIKQENNLENK) the composition is skewed to basic and acidic residues.

The protein belongs to the FKBP-type PPIase family. Tig subfamily.

It localises to the cytoplasm. The catalysed reaction is [protein]-peptidylproline (omega=180) = [protein]-peptidylproline (omega=0). Its function is as follows. Involved in protein export. Acts as a chaperone by maintaining the newly synthesized protein in an open conformation. Functions as a peptidyl-prolyl cis-trans isomerase. The polypeptide is Trigger factor (Mesomycoplasma hyopneumoniae (strain J / ATCC 25934 / NCTC 10110) (Mycoplasma hyopneumoniae)).